The sequence spans 259 residues: Undecaprenyl-diphosphatase (259 aa).

A run of 7 helical transmembrane segments spans residues 1 to 21 (MEIFKVIFLGIIQGLTEFLPI), 40 to 60 (QITLDVFLHFGTVIPVLIIFW), 75 to 95 (WLTILILVGIIPTGIIGILFE), 101 to 121 (LFSSVKTVGFMLLVTGFLLYL), 179 to 199 (SFLLSAPVIFGAGLVELKDAL), 206 to 226 (LTWLSIIIGTIFAALSGYFAI), and 239 to 259 (TVFAYYCWIVGIMIIILAGIF).

It belongs to the UppP family.

The protein resides in the cell inner membrane. The enzyme catalyses di-trans,octa-cis-undecaprenyl diphosphate + H2O = di-trans,octa-cis-undecaprenyl phosphate + phosphate + H(+). Catalyzes the dephosphorylation of undecaprenyl diphosphate (UPP). Confers resistance to bacitracin. This is Undecaprenyl-diphosphatase from Halothermothrix orenii (strain H 168 / OCM 544 / DSM 9562).